A 180-amino-acid chain; its full sequence is Shikimate kinase (180 aa).

19-24 (GAGKTT) provides a ligand contact to ATP. Thr23 is a binding site for Mg(2+). Substrate contacts are provided by Asp41, Arg65, and Gly87. Arg125 is an ATP binding site. Residue Arg144 coordinates substrate.

This sequence belongs to the shikimate kinase family. Monomer. Mg(2+) serves as cofactor.

Its subcellular location is the cytoplasm. It catalyses the reaction shikimate + ATP = 3-phosphoshikimate + ADP + H(+). It participates in metabolic intermediate biosynthesis; chorismate biosynthesis; chorismate from D-erythrose 4-phosphate and phosphoenolpyruvate: step 5/7. Catalyzes the specific phosphorylation of the 3-hydroxyl group of shikimic acid using ATP as a cosubstrate. The polypeptide is Shikimate kinase (Acinetobacter baylyi (strain ATCC 33305 / BD413 / ADP1)).